We begin with the raw amino-acid sequence, 1008 residues long: GGFDFSFLPQPPQEKGHDGGRYYRAKQGVGLGPGPMGLMGPRGPPGASGAPGPQGFPAGEPGEPGQTGPAGARGPAGPPGKADGHPGKPGRPGERGVVGPQGARGFPGTPGLPGFKGIRGHNGLDGLKGQPGAPGVKGEPGAPGENGTPGQTGARGLPGERGRVGAPGPAGARGSDGSVGPVGPAGPIGSAGPPGFPGAPGPKGELGPVGNTGPSGPAGPRGEQGLPGVSGPVGPPGNPGANGLTGAKGAAGLPGVAGAPGLPGPRGIPGPVGASGATGARGLVGEPGPAGSKGESGNKGEPGSAGPQGPPGSSGEEGKRGPNGESGSTGPTGPPGLRGGPGSRGLPGADGRAGVIGPAGARGASGPAGVRGPSGDTGRPGEPGLMGARGLPGSPGNVGPAGKEGPAGLPGIDGRPGPIGPAGARGEAGNIGFPGPKGPAGDPGKGEKGHAGLAGNRGQGGKGEQGPAGPPGFQGLPGPAGTTGEAGKPGERGIPGEFGLPGPAGPRGERGPPGESGAVGPSGAIGSRGPSGPPGPDGNKGEPGVVGAPGTAGPAGSGGLPGERGAAGMPGGKGEKGELGLRGEVGTTGRDGARGAPGAVGAPGPAGATGDRGEAGAAGPAGPAGPRGSPGERGEVGPAGPNGFAGPAGAAGQPGAKGERGTKGPKGENGIVGPTGPVGSAGPAGPNGPAGPAGSRGDGGPPGATGFPGAAGRTGPPGPSGITGPPGPPGAAGKEGLRGPRGDQGPVGRTGETGAGGPPGFTGEKGPSGEPGTAGPPGTAGPQGLLGAPGILGLPGSRGERGLPGVAGAVGEPGPLGIGPPGARGPPGAVGSPGVNGAPGNPGSDGPPGRDGLPGHKGERGYAGNAGPVGAAGAPGPHGTVGPAGKHGNRGEPGPVGSVGPVGALGPRGPSGPQGIRGDKGEPGDKGPRGLPGLKGHNGLQGLPGLAGQHGDQGPGPVGPAGPRGPAGPSGPAGKDGRTGHPGAVGPAGIRGSGGGYDFGYEGDFYRA.

Residues 1 to 999 (GGFDFSFLPQ…IRGSGGGYDF (999 aa)) form a disordered region. 4 positions are modified to 4-hydroxyproline: P9, P12, P45, and P51. The span at 38-81 (LMGPRGPPGASGAPGPQGFPAGEPGEPGQTGPAGARGPAGPPGK) shows a compositional bias: low complexity. The span at 82–94 (ADGHPGKPGRPGE) shows a compositional bias: basic and acidic residues. A 5-hydroxylysine; alternate modification is found at K116. K116 carries O-linked (Gal...) hydroxylysine; alternate glycosylation. Composition is skewed to low complexity over residues 164–193 (VGAPGPAGARGSDGSVGPVGPAGPIGSAGP), 239–260 (PGANGLTGAKGAAGLPGVAGAP), and 301–314 (EPGSAGPQGPPGSS). A compositionally biased stretch (gly residues) spans 336–345 (GLRGGPGSRG). Over residues 358-374 (PAGARGASGPAGVRGPS) the composition is skewed to low complexity. Residues P380 and P383 each carry the 4-hydroxyproline modification. Low complexity predominate over residues 409–428 (LPGIDGRPGPIGPAGARGEA). Gly residues predominate over residues 455–466 (GNRGQGGKGEQG). 2 stretches are compositionally biased toward low complexity: residues 513–530 (PGESGAVGPSGAIGSRGP) and 542–552 (EPGVVGAPGTA). Gly residues predominate over residues 553–562 (GPAGSGGLPG). 2 stretches are compositionally biased toward low complexity: residues 582–629 (RGEV…PRGS) and 636–656 (VGPAGPNGFAGPAGAAGQPGA). Residues 657-666 (KGERGTKGPK) show a composition bias toward basic and acidic residues. Low complexity predominate over residues 674-684 (PTGPVGSAGPA). The segment covering 694-703 (GSRGDGGPPG) has biased composition (gly residues). The segment covering 704–714 (ATGFPGAAGRT) has biased composition (low complexity). Over residues 751-760 (GETGAGGPPG) the composition is skewed to gly residues. 5 stretches are compositionally biased toward low complexity: residues 768–795 (SGEPGTAGPPGTAGPQGLLGAPGILGLP), 803–813 (LPGVAGAVGEP), 826–842 (PPGAVGSPGVNGAPGNP), 862–884 (YAGNAGPVGAAGAPGPHGTVGPA), and 892–907 (EPGPVGSVGPVGALGP). The span at 917 to 928 (RGDKGEPGDKGP) shows a compositional bias: basic and acidic residues. The span at 989–998 (GIRGSGGGYD) shows a compositional bias: gly residues.

It belongs to the fibrillar collagen family. As to quaternary structure, trimers of one alpha 2(I) and two alpha 1(I) chains. Interacts (via C-terminus) with TMEM131 (via PapD-L domain); the interaction is direct and is involved in assembly and TRAPPIII ER-to-Golgi transport complex-dependent secretion of collagen. Prolines at the third position of the tripeptide repeating unit (G-X-Y) are hydroxylated in some or all of the chains. As to expression, expressed in bones.

The protein resides in the secreted. It is found in the extracellular space. The protein localises to the extracellular matrix. Type I collagen is a member of group I collagen (fibrillar forming collagen). This is Collagen alpha-2(I) chain from Nothrotheriops shastensis (Shasta ground sloth).